Here is a 120-residue protein sequence, read N- to C-terminus: NAD(P)H-quinone oxidoreductase subunit 3, chloroplastic (120 aa).

Transmembrane regions (helical) follow at residues 9 to 29 (IFWA…FISG), 64 to 84 (MFAL…PWAM), and 88 to 108 (VLGV…IVGL).

This sequence belongs to the complex I subunit 3 family. NDH is composed of at least 16 different subunits, 5 of which are encoded in the nucleus.

The protein resides in the plastid. It is found in the chloroplast thylakoid membrane. It carries out the reaction a plastoquinone + NADH + (n+1) H(+)(in) = a plastoquinol + NAD(+) + n H(+)(out). The enzyme catalyses a plastoquinone + NADPH + (n+1) H(+)(in) = a plastoquinol + NADP(+) + n H(+)(out). In terms of biological role, NDH shuttles electrons from NAD(P)H:plastoquinone, via FMN and iron-sulfur (Fe-S) centers, to quinones in the photosynthetic chain and possibly in a chloroplast respiratory chain. The immediate electron acceptor for the enzyme in this species is believed to be plastoquinone. Couples the redox reaction to proton translocation, and thus conserves the redox energy in a proton gradient. This is NAD(P)H-quinone oxidoreductase subunit 3, chloroplastic from Panax ginseng (Korean ginseng).